Here is a 117-residue protein sequence, read N- to C-terminus: Large ribosomal subunit protein bL20c (117 aa).

It belongs to the bacterial ribosomal protein bL20 family.

The protein resides in the plastid. Its subcellular location is the chloroplast. Functionally, binds directly to 23S ribosomal RNA and is necessary for the in vitro assembly process of the 50S ribosomal subunit. It is not involved in the protein synthesizing functions of that subunit. The chain is Large ribosomal subunit protein bL20c from Ceratophyllum demersum (Rigid hornwort).